The following is a 744-amino-acid chain: Cytoskeleton-associated protein 2-like (744 aa).

Disordered regions lie at residues Tyr35–Lys56, Leu76–Glu169, Lys182–Ala216, Thr317–Gly337, and Asn428–Thr452. Polar residues-rich tracts occupy residues Leu76 to Ser86, Ser102 to Gly129, and Gly137 to Gln154. A Glycyl lysine isopeptide (Lys-Gly) (interchain with G-Cter in SUMO1); alternate cross-link involves residue Lys195. Lys195 is covalently cross-linked (Glycyl lysine isopeptide (Lys-Gly) (interchain with G-Cter in SUMO2); alternate). The segment covering Glu199 to Ala216 has biased composition (polar residues). A Phosphoserine modification is found at Ser744.

This sequence belongs to the CKAP2 family. Post-translationally, ubiquitinated by the anaphase promoting complex/cyclosome (APC/C).

It is found in the cytoplasm. Its subcellular location is the cytoskeleton. The protein localises to the spindle pole. Its function is as follows. Microtubule-associated protein required for mitotic spindle formation and cell-cycle progression in neural progenitor cells. The sequence is that of Cytoskeleton-associated protein 2-like (CKAP2L) from Bos taurus (Bovine).